Here is a 233-residue protein sequence, read N- to C-terminus: Ribosomal RNA small subunit methyltransferase G (233 aa).

A disordered region spans residues 1–25; it reads MASRQSPMAVSQPDHADRSAALQLT. S-adenosyl-L-methionine-binding residues include G85, F90, and R155.

It belongs to the methyltransferase superfamily. RNA methyltransferase RsmG family.

It is found in the cytoplasm. It catalyses the reaction guanosine(527) in 16S rRNA + S-adenosyl-L-methionine = N(7)-methylguanosine(527) in 16S rRNA + S-adenosyl-L-homocysteine. Functionally, specifically methylates the N7 position of guanine in position 527 of 16S rRNA. The chain is Ribosomal RNA small subunit methyltransferase G from Rhodopseudomonas palustris (strain BisB5).